A 727-amino-acid chain; its full sequence is Fatty acid oxidation complex subunit alpha (727 aa).

The tract at residues 1–200 (MNDQQPFSAI…RQGLVDEAVP (200 aa)) is enoyl-CoA hydratase. Residues 316-727 (KPIHYVGILG…PPTDEDDSAS (412 aa)) are 3-hydroxyacyl-CoA dehydrogenase.

It in the N-terminal section; belongs to the enoyl-CoA hydratase/isomerase family. This sequence in the central section; belongs to the 3-hydroxyacyl-CoA dehydrogenase family. In terms of assembly, heterotetramer of two alpha chains (FadJ) and two beta chains (FadI).

The protein resides in the cytoplasm. The catalysed reaction is a (3S)-3-hydroxyacyl-CoA = a (2E)-enoyl-CoA + H2O. It catalyses the reaction a 4-saturated-(3S)-3-hydroxyacyl-CoA = a (3E)-enoyl-CoA + H2O. The enzyme catalyses a (3S)-3-hydroxyacyl-CoA + NAD(+) = a 3-oxoacyl-CoA + NADH + H(+). It carries out the reaction (3S)-3-hydroxybutanoyl-CoA = (3R)-3-hydroxybutanoyl-CoA. It functions in the pathway lipid metabolism; fatty acid beta-oxidation. Catalyzes the formation of a hydroxyacyl-CoA by addition of water on enoyl-CoA. Also exhibits 3-hydroxyacyl-CoA epimerase and 3-hydroxyacyl-CoA dehydrogenase activities. This chain is Fatty acid oxidation complex subunit alpha, found in Pectobacterium carotovorum subsp. carotovorum (strain PC1).